A 71-amino-acid polypeptide reads, in one-letter code: Small ribosomal subunit protein bS21B (71 aa).

It belongs to the bacterial ribosomal protein bS21 family.

This chain is Small ribosomal subunit protein bS21B, found in Rhizobium johnstonii (strain DSM 114642 / LMG 32736 / 3841) (Rhizobium leguminosarum bv. viciae).